Reading from the N-terminus, the 1726-residue chain is Merozoite surface protein 1 (1726 aa).

The signal sequence occupies residues 1-19 (MKIIFFLCSFLFFIINTQC). The segment covering 61–124 (KGASAQSGTS…SGTSGTSPSS (64 aa)) has biased composition (low complexity). The segment at 61-149 (KGASAQSGTS…PPADASDSDA (89 aa)) is disordered. Positions 125-134 (RSNTLPRSNT) are enriched in polar residues. Asn-133 carries N-linked (GlcNAc...) asparagine glycosylation. Over residues 135–144 (SSGASPPADA) the composition is skewed to low complexity. N-linked (GlcNAc...) asparagine glycans are attached at residues Asn-272, Asn-501, Asn-567, and Asn-638. Positions 735–771 (SETTEDGGHSTHTLSQSGETEVTEETEETEETVGHTT) are disordered. The span at 755-765 (EVTEETEETEE) shows a compositional bias: acidic residues. N-linked (GlcNAc...) asparagine glycosylation is found at Asn-827, Asn-924, Asn-944, Asn-990, Asn-1016, Asn-1114, and Asn-1221. Positions 914 to 952 (TGTSSTSSPGNTTVNTAQSATHSNSQNQQSNASSTNTQN) are enriched in low complexity. A disordered region spans residues 914–961 (TGTSSTSSPGNTTVNTAQSATHSNSQNQQSNASSTNTQNGVAVSSGPA). Disordered stretches follow at residues 1254–1284 (VTPP…TQIP) and 1476–1497 (KEKF…DEQK). Positions 1270–1284 (VSGSSGSTKEETQIP) are enriched in polar residues. Residues 1481-1490 (SSPPTTPPSP) are compositionally biased toward pro residues. Asn-1613 is a glycosylation site (N-linked (GlcNAc...) asparagine). EGF-like domains lie at 1617–1657 (HQCV…VENP) and 1658–1705 (NPTC…IFCS). Disulfide bonds link Cys-1619–Cys-1630, Cys-1624–Cys-1640, Cys-1642–Cys-1653, Cys-1661–Cys-1674, Cys-1668–Cys-1688, and Cys-1690–Cys-1704. The GPI-anchor amidated serine moiety is linked to residue Ser-1705. A propeptide spans 1706-1726 (SSNFLGISFLLILMLILYSFI) (removed in mature form).

In terms of assembly, forms a complex composed of subunits p83, p30, p38, and p42 which remain non-covalently associated; the complex is formed at the merozoite surface prior to egress from host erythrocytes. Forms a complex composed of processed MSP1 subunits, MSP6 subunit p36 and MSP7; the complex is formed at the merozoite surface prior to egress from host erythrocytes. Within the complex, interacts (via subunit p38) with MSP6 subunit p36 and (via subunits p83, p30 and p38) with MSP7 (via subunit p22). Forms a complex composed of MSP1, MSP6, DBLMSP1 and DBLMSP2. Within the complex, interacts (via subunit p38) with DBLMSP1 and DBLMSP2. Forms a complex composed of MSP1, and rhoptry proteins RhopH3, RAP1 and CLAG9/RhopH3. Within the complex, interacts (via subunits p42 and p19) with RhopH3 (via C-terminus). Forms a complex composed of MSP1, MSP6, MSP7, MSP9 and MSP3; within the complex, MSP6 and MSP9 mediate the binding to the host erythrocyte. Interacts (via subunits p19 and p42) with MSP9; the interaction is direct; MSP1 subunits p19 or p42, and MSP9 form a co-ligand complex that interacts with host SLC4A1/Band 3 protein. May interact with PFD6. Interacts with host spectrin. Interacts with host glycophorin GYPA in a sialic acid-independent manner. As to quaternary structure, interacts with host proinflammatory cytokine S100P; the interaction blocks S100P inflammatory and chemotactic activities. In terms of assembly, interacts with host SLC4A1/Band 3 (via 5ABC region) on the host erythrocyte surface in a sialic acid-independent manner. The p190 precursor is cleaved by SUB1 prior to merozoite egress into 4 subunits p83, p30, p38, and p42 which remain non-covalently associated. SUB1-mediated proteolytic cleavage occurs in an orderly manner; the first cleavage occurs at the p30/p38 site, followed by cleavage at the p83/p30 site, the last cleavage occurs at the p38/p42 site. The order of cleavage is essential for parasite viability. SUB1-mediated processing is essential for merozoite egress. In a second processing step during erythrocyte invasion, p42 is cleaved by SUB2 into p33 and p19; the latter remains attached to the merozoite surface via its GPI-anchor and is endocytosed during the subsequent ring stage.

The protein localises to the cell membrane. Its subcellular location is the secreted. The protein resides in the vacuole membrane. During the asexual blood stage, involved in merozoite egress from host erythrocytes possibly via its interaction with the host cytoskeleton protein spectrin resulting in the destabilization of the host cytoskeleton and thus leading to erythrocyte cell membrane rupture. Involved in the binding to host erythrocytes and is required for host erythrocyte invasion. Its function is as follows. By binding to host proinflammatory cytokine S100P may interfere with host immune responses. In terms of biological role, involved in merozoite invasion of host erythrocytes. May play a role in the biogenesis and/or function of the food vacuole during the intraerythrocytic development. The polypeptide is Merozoite surface protein 1 (Plasmodium falciparum (isolate Palo Alto / Uganda)).